The primary structure comprises 101 residues: Small ribosomal subunit protein uS14 (101 aa).

It belongs to the universal ribosomal protein uS14 family. In terms of assembly, part of the 30S ribosomal subunit. Contacts proteins S3 and S10.

In terms of biological role, binds 16S rRNA, required for the assembly of 30S particles and may also be responsible for determining the conformation of the 16S rRNA at the A site. In Shewanella putrefaciens (strain CN-32 / ATCC BAA-453), this protein is Small ribosomal subunit protein uS14.